Consider the following 182-residue polypeptide: ATP synthase subunit delta (182 aa).

The protein belongs to the ATPase delta chain family. In terms of assembly, F-type ATPases have 2 components, F(1) - the catalytic core - and F(0) - the membrane proton channel. F(1) has five subunits: alpha(3), beta(3), gamma(1), delta(1), epsilon(1). F(0) has three main subunits: a(1), b(2) and c(10-14). The alpha and beta chains form an alternating ring which encloses part of the gamma chain. F(1) is attached to F(0) by a central stalk formed by the gamma and epsilon chains, while a peripheral stalk is formed by the delta and b chains.

It localises to the cell membrane. Functionally, f(1)F(0) ATP synthase produces ATP from ADP in the presence of a proton or sodium gradient. F-type ATPases consist of two structural domains, F(1) containing the extramembraneous catalytic core and F(0) containing the membrane proton channel, linked together by a central stalk and a peripheral stalk. During catalysis, ATP synthesis in the catalytic domain of F(1) is coupled via a rotary mechanism of the central stalk subunits to proton translocation. In terms of biological role, this protein is part of the stalk that links CF(0) to CF(1). It either transmits conformational changes from CF(0) to CF(1) or is implicated in proton conduction. The sequence is that of ATP synthase subunit delta from Desulforudis audaxviator (strain MP104C).